Here is a 204-residue protein sequence, read N- to C-terminus: MSFDNYLVPTVIEQSGRGERAFDIYSRLLKERIVFLVGPVTDESANLVVAQLLFLESENPDKDIFFYINSPGGSVTAGMSIYDTMNFIKPDVSTLCLGQAASMGAFLLSAGEKGKRFALPNSRIMIHQPLISGGLGGQASDIEIHARELLKIKEKLNRLMAKHCGRDLADLERDTDRDNFMSAEEAKEYGLIDQVLENRASLQL.

The active-site Nucleophile is S102. The active site involves H127.

Belongs to the peptidase S14 family. In terms of assembly, fourteen ClpP subunits assemble into 2 heptameric rings which stack back to back to give a disk-like structure with a central cavity, resembling the structure of eukaryotic proteasomes.

The protein resides in the cytoplasm. The catalysed reaction is Hydrolysis of proteins to small peptides in the presence of ATP and magnesium. alpha-casein is the usual test substrate. In the absence of ATP, only oligopeptides shorter than five residues are hydrolyzed (such as succinyl-Leu-Tyr-|-NHMec, and Leu-Tyr-Leu-|-Tyr-Trp, in which cleavage of the -Tyr-|-Leu- and -Tyr-|-Trp bonds also occurs).. Its function is as follows. Cleaves peptides in various proteins in a process that requires ATP hydrolysis. Has a chymotrypsin-like activity. Plays a major role in the degradation of misfolded proteins. The sequence is that of ATP-dependent Clp protease proteolytic subunit from Neisseria meningitidis serogroup A / serotype 4A (strain DSM 15465 / Z2491).